Reading from the N-terminus, the 579-residue chain is Zinc finger protein 248 (579 aa).

The 72-residue stretch at 8–79 folds into the KRAB domain; that stretch reads VSFKDVCVDF…EKGFPSQCHP (72 aa). The segment at 240 to 264 adopts a C2H2-type 1; degenerate zinc-finger fold; the sequence is TVCKYNECGRTFIESLKLNISQRPH. Residue Lys-341 forms a Glycyl lysine isopeptide (Lys-Gly) (interchain with G-Cter in SUMO2) linkage. 7 C2H2-type zinc fingers span residues 380-402, 408-430, 436-458, 464-486, 492-514, 520-543, and 548-570; these read FECGECGKTFWEKSNLTQHQRTH, YECTECGKAFCQKPHLTNHQRTH, YECKQCGKTFCVKSNLTEHQRTH, YECNACGKSFCHRSALTVHQRTH, FICNECGKSFCVKSNLIVHQRTH, YKCNECGKTFCEKSALTKHQRTHT, and YECNACGKTFSQRSVLTKHQRIH.

This sequence belongs to the krueppel C2H2-type zinc-finger protein family.

The protein localises to the nucleus. May be involved in transcriptional regulation. In Homo sapiens (Human), this protein is Zinc finger protein 248 (ZNF248).